A 260-amino-acid chain; its full sequence is Thrombin-like enzyme 1 (260 aa).

A signal peptide spans 1–18 (MVLITVLANLLILQLSYA). Positions 19-24 (QKSSEL) are excised as a propeptide. Residues 25–251 (VIGGDECNIN…HLDWIQSIIA (227 aa)) enclose the Peptidase S1 domain. Intrachain disulfides connect Cys31–Cys165, Cys52–Cys68, Cys102–Cys258, Cys144–Cys212, Cys176–Cys191, and Cys202–Cys227. Residue His67 is the Charge relay system of the active site. N-linked (GlcNAc...) asparagine glycosylation occurs at Asn105. Asp112 (charge relay system) is an active-site residue. N-linked (GlcNAc...) asparagine glycans are attached at residues Asn156 and Asn172. Ser206 serves as the catalytic Charge relay system. Asn253 carries an N-linked (GlcNAc...) asparagine glycan.

This sequence belongs to the peptidase S1 family. Snake venom subfamily. Monomer. As to expression, expressed by the venom gland.

The protein localises to the secreted. In terms of biological role, thrombin-like snake venom serine protease. This is Thrombin-like enzyme 1 from Trimeresurus albolabris (White-lipped pit viper).